Here is a 1441-residue protein sequence, read N- to C-terminus: Gag-Pol polyprotein (1441 aa).

Glycine 2 is lipidated: N-myristoyl glycine; by host. Positions 7 to 31 (VLSGGELDRWENIRLRPGGKKKYKL) are interaction with Gp41. The interaction with host CALM1 stretch occupies residues 8-43 (LSGGELDRWENIRLRPGGKKKYKLKHVVWASRELER). The interval 12–19 (ELDRWENI) is interaction with host AP3D1. The segment at 14-33 (DRWENIRLRPGGKKKYKLKH) is interaction with membrane phosphatidylinositol 4,5-bisphosphate and RNA. Positions 16–22 (WENIRLR) match the Nuclear export signal motif. Residues 26–32 (KKKYKLK) carry the Nuclear localization signal motif. The segment at 73-77 (EELKS) is interaction with membrane phosphatidylinositol 4,5-bisphosphate. Residues 106–131 (EEQNKSKKKAQQAAADTGNRGNSSQV) form a disordered region. Tyrosine 135 is subject to Phosphotyrosine; by host. The segment at 192-230 (NTVGGHQAAMQMLKETINEEAAEWDRLHPVHAGPITPGQ) is interaction with human PPIA/CYPA and NUP153. The interval 280–366 (YSPSSILDIR…GGPGHKARVL (87 aa)) is dimerization/Multimerization of capsid protein p24. CCHC-type zinc fingers lie at residues 393 to 410 (IKCF…NCRA) and 414 to 431 (RGCW…DCTE). Positions 451 to 460 (SSEQNRANSP) are enriched in polar residues. A disordered region spans residues 451–489 (SSEQNRANSPTRRELQVWGRDNNSLSEAGEEAGDDRQGP). The segment at 495 to 499 (PQITL) is dimerization of protease. The Peptidase A2 domain maps to 514–583 (KEALLDTGAD…TPVNIIGRNL (70 aa)). Aspartate 519 functions as the For protease activity; shared with dimeric partner in the catalytic mechanism. 2 dimerization of protease regions span residues 543 to 549 (GIGGFIK) and 582 to 594 (NLLT…LNFP). The Reverse transcriptase domain occupies 637 to 827 (EGKISKIGPE…PPFLWMGYEL (191 aa)). The Mg(2+) site is built by aspartate 703, aspartate 778, and aspartate 779. Positions 820 to 828 (FLWMGYELH) are RT 'primer grip'. The Tryptophan repeat motif signature appears at 991-1007 (WETWWTEYTXATWIPEW). Residues 1027–1150 (IVGAETFYVD…VDKLVSAGIR (124 aa)) enclose the RNase H type-1 domain. Mg(2+)-binding residues include aspartate 1036, glutamate 1071, aspartate 1091, and aspartate 1142. The Integrase-type zinc finger occupies 1156–1197 (DGIDKAQEDHEKYHSNWRAMASDFNLPPIVAKEIVASCDKCQ). The Zn(2+) site is built by histidine 1165, histidine 1169, cysteine 1193, and cysteine 1196. In terms of domain architecture, Integrase catalytic spans 1207–1357 (VDCSPGIWQL…SAGERIVGII (151 aa)). Aspartate 1217, aspartate 1269, and glutamate 1305 together coordinate Mg(2+). Residues 1376 to 1423 (FRVYYRDSRDPLWKGPAKLLWKGEGAVVIQDNNDIKVVPRRKAKVIRD) constitute a DNA-binding region (integrase-type).

In terms of assembly, homotrimer; further assembles as hexamers of trimers. Interacts with gp41 (via C-terminus). Interacts with host CALM1; this interaction induces a conformational change in the Matrix protein, triggering exposure of the myristate group. Interacts with host AP3D1; this interaction allows the polyprotein trafficking to multivesicular bodies during virus assembly. Part of the pre-integration complex (PIC) which is composed of viral genome, matrix protein, Vpr and integrase. As to quaternary structure, homodimer; the homodimer further multimerizes as homohexamers or homopentamers. Interacts with human PPIA/CYPA; This interaction stabilizes the capsid. Interacts with human NUP153. Interacts with host PDZD8; this interaction stabilizes the capsid. Interacts with monkey TRIM5; this interaction destabilizes the capsid. Homodimer, whose active site consists of two apposed aspartic acid residues. In terms of assembly, heterodimer of p66 RT and p51 RT (RT p66/p51). Heterodimerization of RT is essential for DNA polymerase activity. The overall folding of the subdomains is similar in p66 RT and p51 RT but the spatial arrangements of the subdomains are dramatically different. As to quaternary structure, homotetramer; may further associate as a homohexadecamer. Part of the pre-integration complex (PIC) which is composed of viral genome, matrix protein, Vpr and integrase. Interacts with human SMARCB1/INI1 and human PSIP1/LEDGF isoform 1. Interacts with human KPNA3; this interaction might play a role in nuclear import of the pre-integration complex. Interacts with human NUP153; this interaction might play a role in nuclear import of the pre-integration complex. Requires Mg(2+) as cofactor. Post-translationally, specific enzymatic cleavages by the viral protease yield mature proteins. The protease is released by autocatalytic cleavage. The polyprotein is cleaved during and after budding, this process is termed maturation. Proteolytic cleavage of p66 RT removes the RNase H domain to yield the p51 RT subunit. Nucleocapsid protein p7 might be further cleaved after virus entry. Tyrosine phosphorylated presumably in the virion by a host kinase. Phosphorylation is apparently not a major regulator of membrane association. In terms of processing, phosphorylated possibly by host MAPK1; this phosphorylation is necessary for Pin1-mediated virion uncoating. Post-translationally, methylated by host PRMT6, impairing its function by reducing RNA annealing and the initiation of reverse transcription.

It is found in the host cell membrane. Its subcellular location is the host endosome. The protein resides in the host multivesicular body. It localises to the virion membrane. The protein localises to the host nucleus. It is found in the host cytoplasm. Its subcellular location is the virion. It carries out the reaction Specific for a P1 residue that is hydrophobic, and P1' variable, but often Pro.. The catalysed reaction is Endohydrolysis of RNA in RNA/DNA hybrids. Three different cleavage modes: 1. sequence-specific internal cleavage of RNA. Human immunodeficiency virus type 1 and Moloney murine leukemia virus enzymes prefer to cleave the RNA strand one nucleotide away from the RNA-DNA junction. 2. RNA 5'-end directed cleavage 13-19 nucleotides from the RNA end. 3. DNA 3'-end directed cleavage 15-20 nucleotides away from the primer terminus.. The enzyme catalyses 3'-end directed exonucleolytic cleavage of viral RNA-DNA hybrid.. It catalyses the reaction DNA(n) + a 2'-deoxyribonucleoside 5'-triphosphate = DNA(n+1) + diphosphate. Its activity is regulated as follows. Protease: The viral protease is inhibited by many synthetic protease inhibitors (PIs), such as amprenavir, atazanavir, indinavir, loprinavir, nelfinavir, ritonavir and saquinavir. Use of protease inhibitors in tritherapy regimens permit more ambitious therapeutic strategies. Reverse transcriptase/ribonuclease H: RT can be inhibited either by nucleoside RT inhibitors (NRTIs) or by non nucleoside RT inhibitors (NNRTIs). NRTIs act as chain terminators, whereas NNRTIs inhibit DNA polymerization by binding a small hydrophobic pocket near the RT active site and inducing an allosteric change in this region. Classical NRTIs are abacavir, adefovir (PMEA), didanosine (ddI), lamivudine (3TC), stavudine (d4T), tenofovir (PMPA), zalcitabine (ddC), and zidovudine (AZT). Classical NNRTIs are atevirdine (BHAP U-87201E), delavirdine, efavirenz (DMP-266), emivirine (I-EBU), and nevirapine (BI-RG-587). The tritherapies used as a basic effective treatment of AIDS associate two NRTIs and one NNRTI. Mediates, with Gag polyprotein, the essential events in virion assembly, including binding the plasma membrane, making the protein-protein interactions necessary to create spherical particles, recruiting the viral Env proteins, and packaging the genomic RNA via direct interactions with the RNA packaging sequence (Psi). Gag-Pol polyprotein may regulate its own translation, by the binding genomic RNA in the 5'-UTR. At low concentration, the polyprotein would promote translation, whereas at high concentration, the polyprotein would encapsidate genomic RNA and then shut off translation. Its function is as follows. Targets the polyprotein to the plasma membrane via a multipartite membrane-binding signal, that includes its myristoylated N-terminus. Matrix protein is part of the pre-integration complex. Implicated in the release from host cell mediated by Vpu. Binds to RNA. Functionally, forms the conical core that encapsulates the genomic RNA-nucleocapsid complex in the virion. Most core are conical, with only 7% tubular. The core is constituted by capsid protein hexamer subunits. The core is disassembled soon after virion entry. Host restriction factors such as TRIM5-alpha or TRIMCyp bind retroviral capsids and cause premature capsid disassembly, leading to blocks in reverse transcription. Capsid restriction by TRIM5 is one of the factors which restricts HIV-1 to the human species. Host PIN1 apparently facilitates the virion uncoating. On the other hand, interactions with PDZD8 or CYPA stabilize the capsid. In terms of biological role, encapsulates and protects viral dimeric unspliced genomic RNA (gRNA). Binds these RNAs through its zinc fingers. Acts as a nucleic acid chaperone which is involved in rearangement of nucleic acid secondary structure during gRNA retrotranscription. Also facilitates template switch leading to recombination. As part of the polyprotein, participates in gRNA dimerization, packaging, tRNA incorporation and virion assembly. Aspartyl protease that mediates proteolytic cleavages of Gag and Gag-Pol polyproteins during or shortly after the release of the virion from the plasma membrane. Cleavages take place as an ordered, step-wise cascade to yield mature proteins. This process is called maturation. Displays maximal activity during the budding process just prior to particle release from the cell. Also cleaves Nef and Vif, probably concomitantly with viral structural proteins on maturation of virus particles. Hydrolyzes host EIF4GI and PABP1 in order to shut off the capped cellular mRNA translation. The resulting inhibition of cellular protein synthesis serves to ensure maximal viral gene expression and to evade host immune response. Also mediates cleavage of host YTHDF3. Mediates cleavage of host CARD8, thereby activating the CARD8 inflammasome, leading to the clearance of latent HIV-1 in patient CD4(+) T-cells after viral reactivation; in contrast, HIV-1 can evade CARD8-sensing when its protease remains inactive in infected cells prior to viral budding. Its function is as follows. Multifunctional enzyme that converts the viral RNA genome into dsDNA in the cytoplasm, shortly after virus entry into the cell. This enzyme displays a DNA polymerase activity that can copy either DNA or RNA templates, and a ribonuclease H (RNase H) activity that cleaves the RNA strand of RNA-DNA heteroduplexes in a partially processive 3' to 5' endonucleasic mode. Conversion of viral genomic RNA into dsDNA requires many steps. A tRNA(3)-Lys binds to the primer-binding site (PBS) situated at the 5'-end of the viral RNA. RT uses the 3' end of the tRNA primer to perform a short round of RNA-dependent minus-strand DNA synthesis. The reading proceeds through the U5 region and ends after the repeated (R) region which is present at both ends of viral RNA. The portion of the RNA-DNA heteroduplex is digested by the RNase H, resulting in a ssDNA product attached to the tRNA primer. This ssDNA/tRNA hybridizes with the identical R region situated at the 3' end of viral RNA. This template exchange, known as minus-strand DNA strong stop transfer, can be either intra- or intermolecular. RT uses the 3' end of this newly synthesized short ssDNA to perform the RNA-dependent minus-strand DNA synthesis of the whole template. RNase H digests the RNA template except for two polypurine tracts (PPTs) situated at the 5'-end and near the center of the genome. It is not clear if both polymerase and RNase H activities are simultaneous. RNase H probably can proceed both in a polymerase-dependent (RNA cut into small fragments by the same RT performing DNA synthesis) and a polymerase-independent mode (cleavage of remaining RNA fragments by free RTs). Secondly, RT performs DNA-directed plus-strand DNA synthesis using the PPTs that have not been removed by RNase H as primers. PPTs and tRNA primers are then removed by RNase H. The 3' and 5' ssDNA PBS regions hybridize to form a circular dsDNA intermediate. Strand displacement synthesis by RT to the PBS and PPT ends produces a blunt ended, linear dsDNA copy of the viral genome that includes long terminal repeats (LTRs) at both ends. Functionally, catalyzes viral DNA integration into the host chromosome, by performing a series of DNA cutting and joining reactions. This enzyme activity takes place after virion entry into a cell and reverse transcription of the RNA genome in dsDNA. The first step in the integration process is 3' processing. This step requires a complex comprising the viral genome, matrix protein, Vpr and integrase. This complex is called the pre-integration complex (PIC). The integrase protein removes 2 nucleotides from each 3' end of the viral DNA, leaving recessed CA OH's at the 3' ends. In the second step, the PIC enters cell nucleus. This process is mediated through integrase and Vpr proteins, and allows the virus to infect a non dividing cell. This ability to enter the nucleus is specific of lentiviruses, other retroviruses cannot and rely on cell division to access cell chromosomes. In the third step, termed strand transfer, the integrase protein joins the previously processed 3' ends to the 5' ends of strands of target cellular DNA at the site of integration. The 5'-ends are produced by integrase-catalyzed staggered cuts, 5 bp apart. A Y-shaped, gapped, recombination intermediate results, with the 5'-ends of the viral DNA strands and the 3' ends of target DNA strands remaining unjoined, flanking a gap of 5 bp. The last step is viral DNA integration into host chromosome. This involves host DNA repair synthesis in which the 5 bp gaps between the unjoined strands are filled in and then ligated. Since this process occurs at both cuts flanking the HIV genome, a 5 bp duplication of host DNA is produced at the ends of HIV-1 integration. Alternatively, Integrase may catalyze the excision of viral DNA just after strand transfer, this is termed disintegration. This is Gag-Pol polyprotein (gag-pol) from Human immunodeficiency virus type 1 group M subtype B (isolate MN) (HIV-1).